The primary structure comprises 124 residues: Large ribosomal subunit protein bL12 (124 aa).

Belongs to the bacterial ribosomal protein bL12 family. As to quaternary structure, homodimer. Part of the ribosomal stalk of the 50S ribosomal subunit. Forms a multimeric L10(L12)X complex, where L10 forms an elongated spine to which 2 to 4 L12 dimers bind in a sequential fashion. Binds GTP-bound translation factors.

Forms part of the ribosomal stalk which helps the ribosome interact with GTP-bound translation factors. Is thus essential for accurate translation. The polypeptide is Large ribosomal subunit protein bL12 (Bacteroides fragilis (strain ATCC 25285 / DSM 2151 / CCUG 4856 / JCM 11019 / LMG 10263 / NCTC 9343 / Onslow / VPI 2553 / EN-2)).